The sequence spans 389 residues: Chalcone synthase 1 (389 aa).

Residue cysteine 164 is part of the active site.

Belongs to the thiolase-like superfamily. Chalcone/stilbene synthases family.

It carries out the reaction (E)-4-coumaroyl-CoA + 3 malonyl-CoA + 3 H(+) = 2',4,4',6'-tetrahydroxychalcone + 3 CO2 + 4 CoA. It functions in the pathway secondary metabolite biosynthesis; flavonoid biosynthesis. Functionally, the primary product of this enzyme is 4,2',4',6'-tetrahydroxychalcone (also termed naringenin-chalcone or chalcone) which can under specific conditions spontaneously isomerize into naringenin. The chain is Chalcone synthase 1 (CHS1) from Camellia sinensis (Tea plant).